Reading from the N-terminus, the 752-residue chain is Probable beta-glucosidase D (752 aa).

The N-terminal stretch at 1 to 18 (MRFVSLAVGAALLGAAGA) is a signal peptide. Asparagine 187 and asparagine 237 each carry an N-linked (GlcNAc...) asparagine glycan. Aspartate 265 is an active-site residue. N-linked (GlcNAc...) asparagine glycosylation is found at asparagine 299, asparagine 343, asparagine 441, asparagine 510, asparagine 532, asparagine 571, asparagine 586, asparagine 638, asparagine 661, and asparagine 743.

Belongs to the glycosyl hydrolase 3 family.

It is found in the secreted. It catalyses the reaction Hydrolysis of terminal, non-reducing beta-D-glucosyl residues with release of beta-D-glucose.. Its pathway is glycan metabolism; cellulose degradation. In terms of biological role, beta-glucosidases are one of a number of cellulolytic enzymes involved in the degradation of cellulosic biomass. Catalyzes the last step releasing glucose from the inhibitory cellobiose. This Aspergillus flavus (strain ATCC 200026 / FGSC A1120 / IAM 13836 / NRRL 3357 / JCM 12722 / SRRC 167) protein is Probable beta-glucosidase D (bglD).